A 137-amino-acid chain; its full sequence is Probable S-adenosyl-L-methionine-binding protein MTH_1797 (137 aa).

The 130-residue stretch at 8–137 (IRPVGVVRSP…YYEDIDSLGF (130 aa)) folds into the TsaA-like domain. Residues 25–27 (PAQ), 63–64 (HL), Arg87, Leu97, and 117–120 (LDGS) each bind S-adenosyl-L-methionine.

Belongs to the tRNA methyltransferase O family.

This chain is Probable S-adenosyl-L-methionine-binding protein MTH_1797, found in Methanothermobacter thermautotrophicus (strain ATCC 29096 / DSM 1053 / JCM 10044 / NBRC 100330 / Delta H) (Methanobacterium thermoautotrophicum).